A 367-amino-acid polypeptide reads, in one-letter code: Peptide chain release factor 1 (367 aa).

The residue at position 238 (Gln238) is an N5-methylglutamine.

It belongs to the prokaryotic/mitochondrial release factor family. Post-translationally, methylated by PrmC. Methylation increases the termination efficiency of RF1.

Its subcellular location is the cytoplasm. Functionally, peptide chain release factor 1 directs the termination of translation in response to the peptide chain termination codons UAG and UAA. This is Peptide chain release factor 1 from Dictyoglomus thermophilum (strain ATCC 35947 / DSM 3960 / H-6-12).